A 394-amino-acid chain; its full sequence is Flavin-dependent monooxygenase, oxygenase subunit HsaA (394 aa).

Residues Trp-84, 118-120 (SSY), 141-143 (WSS), Arg-263, 346-347 (AT), and 368-369 (HA) each bind FMN.

Belongs to the HpaH/HsaA monooxygenase family. As to quaternary structure, homotetramer under anaerobic conditions. HsaAB monooxygenase consists of an oxygenase component HsaA and a reductase component HsaB.

The catalysed reaction is 3-hydroxy-9,10-secoandrosta-1,3,5(10)-triene-9,17-dione + FMNH2 + O2 = 3,4-dihydroxy-9,10-secoandrosta-1,3,5(10)-triene-9,17-dione + FMN + H2O + H(+). It participates in lipid metabolism; steroid biosynthesis. In terms of biological role, catalyzes the o-hydroxylation of 3-hydroxy-9,10-secoandrosta-1,3,5(10)-triene-9,17-dione (3-HSA) to 3,4-dihydroxy-9,10-secoandrosta-1,3,5(10)-triene-9,17-dione (3,4-DHSA) in the catabolism of cholesterol. The polypeptide is Flavin-dependent monooxygenase, oxygenase subunit HsaA (Mycobacterium tuberculosis (strain CDC 1551 / Oshkosh)).